We begin with the raw amino-acid sequence, 193 residues long: Putative manganese efflux pump MntP (193 aa).

Helical transmembrane passes span 8-28, 37-57, 61-81, 109-129, 138-158, and 172-192; these read LLAIGLAMDCFAVSIASGIIL, LVMALAFGLFQALMPFIGWMF, FSHLIESVDHWIAFAILAFLG, MAIATSIDALAIGISFALLGI, PILIIGFVSFVMSLIGLYFGI, and LWGGIILVAIGLKILIEHLFL.

Belongs to the MntP (TC 9.B.29) family.

The protein localises to the cell inner membrane. Functionally, probably functions as a manganese efflux pump. In Bacteroides thetaiotaomicron (strain ATCC 29148 / DSM 2079 / JCM 5827 / CCUG 10774 / NCTC 10582 / VPI-5482 / E50), this protein is Putative manganese efflux pump MntP.